The sequence spans 433 residues: MQFLQEKVKLIKKEDPVMLKSPEDFPVYWFETSDSVSHRYQFQSDGHLSMKVVDDARPVPQKMVESFLNKFFPSGYPYSVNEGYLRYTQFRALQHFSSAALSVLSTQSLLFAAGLRPTPAQATVVSWILKDGMQHVGKLICSNLGARMDSEPKRWRILADVLYDLGTGLELVSPLCPHLFLEMAGLGNFAKGMATVAARATRLPIYSSFAKEGNLSDIFAKGEAISTLFNVAGIGAGIQLASTICSSMEGKLVVGSILSVVHVYSVVEQMRGVPINTLNPQRTALIVANFLKTGKVPSPPDLRFQEDLMFPERPIQDAGNVKVGRALHKAVKPSEVQRLKQVFVEEKFLLSHGKSWTDMVLEHDATGEDALRGWLVAAYVKSMTKIYNDPDDIILQDAYDKMNDVFNPFLSQVQAKGWYTDRFLDGTGTRFAW.

It belongs to the RUS1 family. In terms of assembly, interacts (via the DUF647 domain) with RUS1 (via the DUF647 domain). Expressed throughout the plant, with a higher expression near the root apical meristem, in the cortex region of the root elongation zone, in lateral roots and emerging lateral roots. Not detected in extreme root apical meristem or root cap.

Its subcellular location is the plastid. Involved in a root UV-B sensing pathway and in the protection against the hypersensitivity to very low-fluence-rate (VLF) UV-B. RSU1 and RUS2 are probably both negative modulators of the same UV-B perception pathway, which when overstimulated in the roots causes a block to postgermination development. Required for polar auxin transport and to maintain the normal levels of PIN proteins in the root. This Arabidopsis thaliana (Mouse-ear cress) protein is Protein root UVB sensitive 2, chloroplastic.